The sequence spans 966 residues: Phosphoenolpyruvate carboxylase, housekeeping isozyme (966 aa).

At Ser-11 the chain carries Phosphoserine. Active-site residues include His-172 and Lys-601.

The protein belongs to the PEPCase type 1 family. As to quaternary structure, homotetramer. Requires Mg(2+) as cofactor.

Its subcellular location is the cytoplasm. It catalyses the reaction oxaloacetate + phosphate = phosphoenolpyruvate + hydrogencarbonate. By light-reversible phosphorylation. In terms of biological role, through the carboxylation of phosphoenolpyruvate (PEP) it forms oxaloacetate, a four-carbon dicarboxylic acid source for the tricarboxylic acid cycle. This Saccharum hybrid (Sugarcane) protein is Phosphoenolpyruvate carboxylase, housekeeping isozyme.